The primary structure comprises 259 residues: Apolipoprotein A-I (259 aa).

The signal sequence occupies residues 1–18 (MKAAVLAVALVFLTGCQA). A run of 2 repeats spans residues 67–88 (LNLL…EQLG) and 89–110 (PVTQ…NEMN). Residues 67–259 (LNLLDNWDTL…IDEAKKKLNA (193 aa)) form a 10 X approximate tandem repeats region. Methionine 109 carries the post-translational modification Methionine sulfoxide. One copy of the 3; half-length repeat lies at 111–121 (KDLENVKQKMQ). Repeat 4 spans residues 122-143 (PHLDEFQEKWNEEVEAYRQKLE). The stretch at 144–161 (PLGTELHKNAKEMQRHLK) is one 5; truncated repeat. Repeat 6 spans residues 162-183 (VVAEEFRDRMRVNADALRAKFG). A 7; truncated repeat occupies 184–203 (LYSDQMRENLAQRLTEIKNH). Residue methionine 189 is modified to Methionine sulfoxide. Repeat 8 spans residues 204–225 (PTLIEYHTKASDHLKTLGEKAK). The stretch at 226–236 (PALDDLGQGLM) is one 9; half-length repeat. Methionine 236 is modified (methionine sulfoxide). The stretch at 237–259 (PVLEAWKAKIMSMIDEAKKKLNA) is repeat 10.

This sequence belongs to the apolipoprotein A1/A4/E family. As to quaternary structure, homodimer. Interacts with APOA1BP and CLU. Component of a sperm activating protein complex (SPAP), consisting of APOA1, an immunoglobulin heavy chain, an immunoglobulin light chain and albumin. Interacts with NDRG1. Interacts with SCGB3A2. Interacts with NAXE and YJEFN3. Post-translationally, glycosylated. Palmitoylated. In terms of processing, phosphorylation sites are present in the extracellular medium. As to expression, major protein of plasma HDL, also found in chylomicrons.

The protein localises to the secreted. Participates in the reverse transport of cholesterol from tissues to the liver for excretion by promoting cholesterol efflux from tissues and by acting as a cofactor for the lecithin cholesterol acyltransferase (LCAT). As part of the SPAP complex, activates spermatozoa motility. This is Apolipoprotein A-I (Apoa1) from Rattus norvegicus (Rat).